The primary structure comprises 144 residues: D-aminoacyl-tRNA deacylase (144 aa).

The short motif at 136-137 (GP) is the Gly-cisPro motif, important for rejection of L-amino acids element.

This sequence belongs to the DTD family. Homodimer.

The protein resides in the cytoplasm. The enzyme catalyses glycyl-tRNA(Ala) + H2O = tRNA(Ala) + glycine + H(+). It carries out the reaction a D-aminoacyl-tRNA + H2O = a tRNA + a D-alpha-amino acid + H(+). Its function is as follows. An aminoacyl-tRNA editing enzyme that deacylates mischarged D-aminoacyl-tRNAs. Also deacylates mischarged glycyl-tRNA(Ala), protecting cells against glycine mischarging by AlaRS. Acts via tRNA-based rather than protein-based catalysis; rejects L-amino acids rather than detecting D-amino acids in the active site. By recycling D-aminoacyl-tRNA to D-amino acids and free tRNA molecules, this enzyme counteracts the toxicity associated with the formation of D-aminoacyl-tRNA entities in vivo and helps enforce protein L-homochirality. This is D-aminoacyl-tRNA deacylase from Haemophilus ducreyi (strain 35000HP / ATCC 700724).